A 43-amino-acid polypeptide reads, in one-letter code: Metallothionein-2 (43 aa).

A Blocked amino end (Met) modification is found at M1.

This sequence belongs to the metallothionein superfamily. Type 5 family.

Functionally, this protein binds cations of several transition elements. Thought to be involved in metal ion homeostasis. This chain is Metallothionein-2 (MtnB), found in Drosophila melanogaster (Fruit fly).